Here is a 1002-residue protein sequence, read N- to C-terminus: DNA-directed RNA polymerase 1, mitochondrial (1002 aa).

The N-terminal 21 residues, 1-21 (MWRYISKQAYSRKFRNSHDSA), are a transit peptide targeting the mitochondrion. Catalysis depends on residues Asp703, Lys778, and Asp935.

This sequence belongs to the phage and mitochondrial RNA polymerase family. In terms of tissue distribution, the highest levels of expression are detected in the mature leaves. The level of expression is lowest in the cotyledons.

Its subcellular location is the mitochondrion. It carries out the reaction RNA(n) + a ribonucleoside 5'-triphosphate = RNA(n+1) + diphosphate. DNA-dependent RNA polymerase catalyzes the transcription of DNA into RNA using the four ribonucleoside triphosphates as substrates. This chain is DNA-directed RNA polymerase 1, mitochondrial (RPOT1), found in Nicotiana sylvestris (Wood tobacco).